The following is a 173-amino-acid chain: Mitochondrial import inner membrane translocase subunit TIM22-1 (173 aa).

The transit peptide at 1 to 18 (MADSSAAEPTTGASSPPV) directs the protein to the mitochondrion. The interval 1–26 (MADSSAAEPTTGASSPPVASDENSTQ) is disordered. The next 4 membrane-spanning stretches (helical) occupy residues 52–72 (VTSG…LGAL), 101–119 (SCKT…ECIV), 128–144 (TVNT…SMSA), and 151–168 (ACIG…IEKF).

The protein belongs to the Tim17/Tim22/Tim23 family. As to expression, expressed in young cotyledons, roots, flowers and leaves.

It localises to the mitochondrion inner membrane. Functionally, essential core component of the TIM22 complex, a complex that mediates the import and insertion of multi-pass transmembrane proteins into the mitochondrial inner membrane. This is Mitochondrial import inner membrane translocase subunit TIM22-1 (TIM22-1) from Arabidopsis thaliana (Mouse-ear cress).